We begin with the raw amino-acid sequence, 387 residues long: Acetylserotonin O-methyltransferase (387 aa).

Residues Tyr-153, Trp-170, Glu-216, Gly-246 to Phe-248, and Arg-263 contribute to the S-adenosyl-L-methionine site. His-266 serves as the catalytic Proton donor/acceptor. Residues Asp-267 and Gln-317 each coordinate substrate. A disordered region spans residues Ala-355–Asp-387. Over residues Arg-356 to Glu-370 the composition is skewed to gly residues.

This sequence belongs to the class I-like SAM-binding methyltransferase superfamily. Cation-independent O-methyltransferase family. In terms of assembly, homodimer.

It carries out the reaction N-acetylserotonin + S-adenosyl-L-methionine = melatonin + S-adenosyl-L-homocysteine + H(+). It functions in the pathway aromatic compound metabolism; melatonin biosynthesis; melatonin from serotonin: step 1/2. In terms of biological role, catalyzes the transfer of a methyl group onto N-acetylserotonin, producing melatonin (N-acetyl-5-methoxytryptamine). This Mus musculus molossinus (Japanese house mouse) protein is Acetylserotonin O-methyltransferase (Asmt).